Consider the following 167-residue polypeptide: Ribosome maturation factor RimM (167 aa).

The 72-residue stretch at 94 to 165 (EHEYYYSDII…TIKITPMEGL (72 aa)) folds into the PRC barrel domain.

It belongs to the RimM family. In terms of assembly, binds ribosomal protein uS19.

It localises to the cytoplasm. Functionally, an accessory protein needed during the final step in the assembly of 30S ribosomal subunit, possibly for assembly of the head region. Essential for efficient processing of 16S rRNA. May be needed both before and after RbfA during the maturation of 16S rRNA. It has affinity for free ribosomal 30S subunits but not for 70S ribosomes. This chain is Ribosome maturation factor RimM, found in Staphylococcus epidermidis (strain ATCC 35984 / DSM 28319 / BCRC 17069 / CCUG 31568 / BM 3577 / RP62A).